Consider the following 276-residue polypeptide: Adenylate kinase (276 aa).

Residue 52-57 participates in ATP binding; that stretch reads GAGKGT. Residues 72 to 101 are NMP; sequence ATGDMLRAQVAAKTPLGREAKKIMDAGGLV. AMP contacts are provided by residues T73, R78, 99–101, 128–131, and Q135; these read GLV and GFPR. Residues 169-206 form an LID region; that stretch reads GRLVHPASGRSYHKIFNPPKAPMTDDVTGEPLIQRSDD. ATP is bound by residues R170 and 179–180; that span reads SY. AMP is bound by residues R203 and R214. Q242 contributes to the ATP binding site.

The protein belongs to the adenylate kinase family. AK2 subfamily. As to quaternary structure, monomer.

It is found in the cytoplasm. Its subcellular location is the cytosol. It localises to the mitochondrion intermembrane space. The catalysed reaction is AMP + ATP = 2 ADP. Functionally, catalyzes the reversible transfer of the terminal phosphate group between ATP and AMP. Plays an important role in cellular energy homeostasis and in adenine nucleotide metabolism. Adenylate kinase activity is critical for regulation of the phosphate utilization and the AMP de novo biosynthesis pathways. The sequence is that of Adenylate kinase (adk1) from Pyrenophora tritici-repentis (strain Pt-1C-BFP) (Wheat tan spot fungus).